Here is a 505-residue protein sequence, read N- to C-terminus: MAEFQGYLELDRSWKPDLLYPLIFREYIYAFAHDHGLNRSNLLENVGYNNKSSLLIVKRLISRMYQQNHFISSANDSNQNQLFGYNKNLYSQMISEGFAVIVEIPFSLRLVSCLKGTEIVKYYNLRSIHSIFPFLEDKFSHLNYVSDVLIPYPIHLEILVQTLRYWVKDASSLHLLRFFLHDYYNWNSFIIPNKYISIFSKSNPRLFLFLYNSHVFEYESILLFLRNQSSHLRLTSSGGFFERIYFYGKIKHPVEEVFANDFPTSLWFFEDFFMHYVRYQGKSILTSKDTPLFMNKWRYYLVLLWQCHFSVWSQPGRMYINQLCKHSLSFLGYLSNMQINLSVVRSQMLENSFLMDNAMKKIDTLVPISPLIGSLAKMRFCNVLGHPVSKSTWADSSDFDIIDRFAYICRNLFHYYSGSSKKNSLYRVKYILRLSCIKTLARKHKSTVRTFLKRLGSKLLEEFFTEEEEVLSLIFPRTYSALRSSYKGRIWYLDIFCINDLVNHK.

This sequence belongs to the intron maturase 2 family. MatK subfamily.

It is found in the plastid. The protein resides in the chloroplast. Functionally, usually encoded in the trnK tRNA gene intron. Probably assists in splicing its own and other chloroplast group II introns. This chain is Maturase K, found in Ficus carica (Common fig).